Consider the following 118-residue polypeptide: Heavy metal-associated isoprenylated plant protein 12 (118 aa).

One can recognise an HMA domain in the interval 1–65; it reads MQVVVLKLDV…KICHTEFISV (65 aa). The segment at 68–87 is disordered; that stretch reads VKEPEKKKPDDPKKPETKPP. The span at 69–86 shows a compositional bias: basic and acidic residues; that stretch reads KEPEKKKPDDPKKPETKP. At C115 the chain carries Cysteine methyl ester. C115 is lipidated: S-farnesyl cysteine. The propeptide at 116-118 is removed in mature form; that stretch reads VTS.

Belongs to the HIPP family.

In terms of biological role, probable heavy-metal-binding protein. In Arabidopsis thaliana (Mouse-ear cress), this protein is Heavy metal-associated isoprenylated plant protein 12.